A 57-amino-acid chain; its full sequence is Large ribosomal subunit protein bL32 (57 aa).

Positions 1 to 20 (MAVQQRRVSKSRKGMRRSHD) are disordered. Over residues 7–19 (RVSKSRKGMRRSH) the composition is skewed to basic residues.

This sequence belongs to the bacterial ribosomal protein bL32 family.

The protein is Large ribosomal subunit protein bL32 of Ureaplasma urealyticum serovar 10 (strain ATCC 33699 / Western).